We begin with the raw amino-acid sequence, 334 residues long: Type II methyltransferase M.NlaIII (334 aa).

Belongs to the N(4)/N(6)-methyltransferase family.

It catalyses the reaction a 2'-deoxyadenosine in DNA + S-adenosyl-L-methionine = an N(6)-methyl-2'-deoxyadenosine in DNA + S-adenosyl-L-homocysteine + H(+). A methylase, recognizes the double-stranded sequence 5'-CATG-3', methylates A-2 on both strands and protects the DNA from cleavage by the NlaIII endonuclease. The sequence is that of Type II methyltransferase M.NlaIII (nlaIIIM) from Neisseria lactamica.